The primary structure comprises 452 residues: Argininosuccinate lyase (452 aa).

The segment at 431 to 452 (AFRKDSTGSTSPKWSFRAMRRA) is disordered.

This sequence belongs to the lyase 1 family. Argininosuccinate lyase subfamily.

It is found in the cytoplasm. The enzyme catalyses 2-(N(omega)-L-arginino)succinate = fumarate + L-arginine. It participates in amino-acid biosynthesis; L-arginine biosynthesis; L-arginine from L-ornithine and carbamoyl phosphate: step 3/3. This chain is Argininosuccinate lyase, found in Tremblaya princeps.